A 174-amino-acid polypeptide reads, in one-letter code: Co-chaperone protein HscB homolog (174 aa).

The J domain occupies 2–74 (NYFELFKFSP…IRRAEHMLSL (73 aa)).

This sequence belongs to the HscB family. In terms of assembly, interacts with HscA and stimulates its ATPase activity.

Functionally, co-chaperone involved in the maturation of iron-sulfur cluster-containing proteins. Seems to help targeting proteins to be folded toward HscA. The polypeptide is Co-chaperone protein HscB homolog (Shewanella baltica (strain OS155 / ATCC BAA-1091)).